The sequence spans 460 residues: Lipase member H-A (460 aa).

Positions 1–26 are cleaved as a signal peptide; sequence MLLSFYFNGLLLVGCLLSWGRSDTEG. Residues Asn67 and Asn75 are each glycosylated (N-linked (GlcNAc...) asparagine). Ser163 acts as the Nucleophile in catalysis. An N-linked (GlcNAc...) asparagine glycan is attached at Asn177. Asp187 functions as the Charge relay system in the catalytic mechanism. The cysteines at positions 242 and 255 are disulfide-linked. His257 acts as the Charge relay system in catalysis. Disulfide bonds link Cys279-Cys290 and Cys293-Cys301. Residue Asn289 is glycosylated (N-linked (GlcNAc...) asparagine). Residue Asn366 is glycosylated (N-linked (GlcNAc...) asparagine). Cysteines 436 and 455 form a disulfide.

It belongs to the AB hydrolase superfamily. Lipase family.

The protein resides in the secreted. It is found in the cell membrane. It catalyses the reaction 1-hexadecanoyl-2-(9Z-octadecenoyl)-sn-glycero-3-phosphate + H2O = 2-(9Z-octadecenoyl)-sn-glycero-3-phosphate + hexadecanoate + H(+). Its function is as follows. Hydrolyzes specifically phosphatidic acid (PA) to produce 2-acyl lysophosphatidic acid (LPA; a potent bioactive lipid mediator) and fatty acid. Does not hydrolyze other phospholipids, like phosphatidylserine (PS), phosphatidylcholine (PC) and phosphatidylethanolamine (PE) or triacylglycerol (TG). The sequence is that of Lipase member H-A (liph-a) from Xenopus laevis (African clawed frog).